Consider the following 224-residue polypeptide: uncharacterized protein (224 aa).

A Matrin-type zinc finger spans residues 11–42 (YYCKYCQIFVKDTPFARRSHEQTYKHQDAIKK). Low complexity predominate over residues 67-80 (ATATTASAVSSELA). Disordered regions lie at residues 67 to 158 (ATAT…RNRE) and 172 to 224 (VKPK…YDQS). Basic residues predominate over residues 87-98 (KEHPKLRPSKKK). The segment covering 108–122 (TSSTETDTISTTHTS) has biased composition (low complexity). Residues 175-199 (KNLDKVPKLAENEGNKSLESKESNE) are compositionally biased toward basic and acidic residues. Residues 203–216 (VFKKKKSGKLRTKS) are compositionally biased toward basic residues.

The protein localises to the nucleus. It is found in the nucleolus. This is an uncharacterized protein from Schizosaccharomyces pombe (strain 972 / ATCC 24843) (Fission yeast).